The sequence spans 460 residues: MDSIVTTEDTIAAIASAISIGKGGVAIIRVSGKDSINSCKKIVQTKSKYAWESHRVFHGFILENKQNKFIDEVLILVMKSPNSFTGEDVVELHCHGGIILVNKVLQRLLSSNSRVRLANPGEFSQRAFLNGKIDLTQAESINQLINASNTRSAELAFSGVQGKIKKKINDIKNDLINQLCEIEARVDFEEDFTDFDYNKYLKNIKKVKEKIELLIENAKRNSYIHNGISIALIGKTNVGKSSLLNLLAKKEKAIVTNIPGTTRDVIEVNLTINDIPMKIIDTAGIRETHEQIESIGIKKSFRKIKESDFIIYIYSLEEGFNKEDKKIIQEIPKEKLITILGNKKDLIDCKNINSNELKNTILMSIKNNDGERLLIDTIIKKCGLKQVENINIFLNERHLTNLSSCLSNLNDTDVIIKNKLPFDLLSIELRDGIQNLSKITGQELTEELLDNIFSKFCIGK.

The (6S)-5-formyl-5,6,7,8-tetrahydrofolate site is built by R29, E91, and K132. The 157-residue stretch at 227 to 383 (GISIALIGKT…LIDTIIKKCG (157 aa)) folds into the TrmE-type G domain. N237 is a K(+) binding site. GTP contacts are provided by residues 237–242 (NVGKSS), 256–262 (TNIPGTT), and 281–284 (DTAG). Residue S241 coordinates Mg(2+). The K(+) site is built by T256, I258, and T261. A Mg(2+)-binding site is contributed by T262. K460 is a binding site for (6S)-5-formyl-5,6,7,8-tetrahydrofolate.

Belongs to the TRAFAC class TrmE-Era-EngA-EngB-Septin-like GTPase superfamily. TrmE GTPase family. As to quaternary structure, homodimer. Heterotetramer of two MnmE and two MnmG subunits. K(+) serves as cofactor.

It localises to the cytoplasm. Exhibits a very high intrinsic GTPase hydrolysis rate. Involved in the addition of a carboxymethylaminomethyl (cmnm) group at the wobble position (U34) of certain tRNAs, forming tRNA-cmnm(5)s(2)U34. This is tRNA modification GTPase MnmE from Prochlorococcus marinus (strain MIT 9312).